An 86-amino-acid polypeptide reads, in one-letter code: Large ribosomal subunit protein bL31B (86 aa).

Belongs to the bacterial ribosomal protein bL31 family. Type B subfamily. In terms of assembly, part of the 50S ribosomal subunit.

This chain is Large ribosomal subunit protein bL31B, found in Burkholderia cenocepacia (strain ATCC BAA-245 / DSM 16553 / LMG 16656 / NCTC 13227 / J2315 / CF5610) (Burkholderia cepacia (strain J2315)).